The chain runs to 862 residues: Phosphofurin acidic cluster sorting protein 2 (862 aa).

Disordered regions lie at residues 151–215, 263–436, and 658–713; these read HEDS…TTSM, LDVE…TRSQ, and SSAT…SQGV. Residues 263–272 are compositionally biased toward low complexity; that stretch reads LDVENPSDSG. Residues 313-328 show a composition bias toward basic and acidic residues; sequence SHREPPSPADVPEKTR. Polar residues predominate over residues 332-344; that stretch reads GKQQLSDSVSDTV. Phosphoserine occurs at positions 361, 387, 424, 662, and 665. Low complexity-rich tracts occupy residues 658–693 and 700–710; these read SSATSGDSDDAAPSSSSILSSTPPSASTSPAAKEAS and PSVSGGLSSPS.

Belongs to the PACS family. As to quaternary structure, interacts with BID and PKD2. Interacts with SIRT1. Interacts with HDAC1. Interacts with TRPV1. Interacts with WDR37.

The protein localises to the endoplasmic reticulum. It is found in the mitochondrion. In terms of biological role, multifunctional sorting protein that controls the endoplasmic reticulum (ER)-mitochondria communication, including the apposition of mitochondria with the ER and ER homeostasis. In addition, in response to apoptotic inducer, translocates BIB to mitochondria, which initiates a sequence of events including the formation of mitochondrial truncated BID, the release of cytochrome c, the activation of caspase-3 thereby causing cell death. May also involved in ion channel trafficking, directing acidic cluster-containing ion channels to distinct subcellular compartments. In Mus musculus (Mouse), this protein is Phosphofurin acidic cluster sorting protein 2 (Pacs2).